The following is a 359-amino-acid chain: Small ribosomal subunit protein uS2 (359 aa).

Positions 232–295 (EPQFKPSEFT…PVGTEPVATT (64 aa)) are disordered. 2 stretches are compositionally biased toward basic and acidic residues: residues 239–250 (EFTRRDGDENRN) and 257–273 (DNRR…DTHY).

It belongs to the universal ribosomal protein uS2 family.

The polypeptide is Small ribosomal subunit protein uS2 (rpsB) (Spiroplasma citri).